The sequence spans 261 residues: Chitinase 8 (261 aa).

The N-terminal stretch at 1–29 is a signal peptide; it reads MTTTTTRFVQLAACAAASLLAVAASGAAA. 2 disulfide bridges follow: Cys53–Cys115 and Cys221–Cys253. Glu98 serves as the catalytic Proton donor.

The protein belongs to the glycosyl hydrolase 19 family. Chitinase class II subfamily. Expressed in roots, leaves, sheaths and meristems.

It carries out the reaction Random endo-hydrolysis of N-acetyl-beta-D-glucosaminide (1-&gt;4)-beta-linkages in chitin and chitodextrins.. The sequence is that of Chitinase 8 (Cht8) from Oryza sativa subsp. japonica (Rice).